Reading from the N-terminus, the 483-residue chain is NADH-quinone oxidoreductase subunit N (483 aa).

The next 14 helical transmembrane spans lie at alanine 13–valine 33, tyrosine 39–valine 57, proline 76–serine 96, phenylalanine 110–phenylalanine 130, leucine 131–glutamine 151, phenylalanine 165–valine 185, isoleucine 206–valine 226, proline 240–valine 260, methionine 277–serine 297, methionine 302–serine 322, methionine 330–leucine 350, leucine 373–phenylalanine 393, isoleucine 406–tyrosine 426, and leucine 459–isoleucine 479.

This sequence belongs to the complex I subunit 2 family. As to quaternary structure, NDH-1 is composed of 14 different subunits. Subunits NuoA, H, J, K, L, M, N constitute the membrane sector of the complex.

It localises to the cell inner membrane. It carries out the reaction a quinone + NADH + 5 H(+)(in) = a quinol + NAD(+) + 4 H(+)(out). NDH-1 shuttles electrons from NADH, via FMN and iron-sulfur (Fe-S) centers, to quinones in the respiratory chain. The immediate electron acceptor for the enzyme in this species is believed to be ubiquinone. Couples the redox reaction to proton translocation (for every two electrons transferred, four hydrogen ions are translocated across the cytoplasmic membrane), and thus conserves the redox energy in a proton gradient. This is NADH-quinone oxidoreductase subunit N from Thiobacillus denitrificans (strain ATCC 25259 / T1).